Consider the following 490-residue polypeptide: Betaine aldehyde dehydrogenase (490 aa).

3 residues coordinate K(+): T26, I27, and D93. Residue 150 to 152 participates in NAD(+) binding; the sequence is GAW. K162 functions as the Charge relay system in the catalytic mechanism. 176 to 179 provides a ligand contact to NAD(+); that stretch reads KPSE. Position 180 (V180) interacts with K(+). 230 to 233 serves as a coordination point for NAD(+); that stretch reads GVAS. Residue L246 coordinates K(+). E252 (proton acceptor) is an active-site residue. Residues G254, C286, and E387 each contribute to the NAD(+) site. Catalysis depends on C286, which acts as the Nucleophile. C286 is subject to Cysteine sulfenic acid (-SOH). Residues K457 and G460 each contribute to the K(+) site. The Charge relay system role is filled by E464.

It belongs to the aldehyde dehydrogenase family. As to quaternary structure, dimer of dimers. It depends on K(+) as a cofactor.

It catalyses the reaction betaine aldehyde + NAD(+) + H2O = glycine betaine + NADH + 2 H(+). It functions in the pathway amine and polyamine biosynthesis; betaine biosynthesis via choline pathway; betaine from betaine aldehyde: step 1/1. Involved in the biosynthesis of the osmoprotectant glycine betaine. Catalyzes the irreversible oxidation of betaine aldehyde to the corresponding acid. In Escherichia coli (strain SE11), this protein is Betaine aldehyde dehydrogenase.